A 219-amino-acid chain; its full sequence is Orotate phosphoribosyltransferase (219 aa).

K26 contributes to the 5-phospho-alpha-D-ribose 1-diphosphate binding site. Position 34–35 (34–35 (FF)) interacts with orotate. 5-phospho-alpha-D-ribose 1-diphosphate contacts are provided by residues 72-73 (YK), R98, K99, K102, H104, and 124-132 (DDVITAGTA). Positions 128 and 156 each coordinate orotate.

It belongs to the purine/pyrimidine phosphoribosyltransferase family. PyrE subfamily. As to quaternary structure, homodimer. Mg(2+) is required as a cofactor.

It catalyses the reaction orotidine 5'-phosphate + diphosphate = orotate + 5-phospho-alpha-D-ribose 1-diphosphate. The protein operates within pyrimidine metabolism; UMP biosynthesis via de novo pathway; UMP from orotate: step 1/2. Catalyzes the transfer of a ribosyl phosphate group from 5-phosphoribose 1-diphosphate to orotate, leading to the formation of orotidine monophosphate (OMP). The protein is Orotate phosphoribosyltransferase of Stenotrophomonas maltophilia (strain K279a).